We begin with the raw amino-acid sequence, 315 residues long: Olfactory receptor 3A10 (315 aa).

Residues 1–28 (MEPGAWGNRTAVTDFILLGLTGNVRLQP) are Extracellular-facing. N-linked (GlcNAc...) asparagine glycosylation is present at Asn-8. A helical transmembrane segment spans residues 29–49 (ILFVVFFFAYIVTVGGNLSIL). Over 50 to 68 (AAIFVEPKLHTPMYYFLGN) the chain is Cytoplasmic. Residues 69–89 (LSLLDIGCISVTVPPMLVCLL) form a helical membrane-spanning segment. Over 90-97 (AHECRVPY) the chain is Extracellular. A helical membrane pass occupies residues 98-118 (AACISQLFFFHLLAGVDCHLL). The cysteines at positions 100 and 192 are disulfide-linked. Residues 119–145 (TAMAYDRYLAICQPLTYSTRMSREVQG) lie on the Cytoplasmic side of the membrane. A helical transmembrane segment spans residues 146 to 166 (TLVGICCTVSFINALTHTVAV). The Extracellular segment spans residues 167–200 (SVLDFCGPNVVNHFYCDLPPLFQLSCSSIYLNGQ). The helical transmembrane segment at 201-221 (LLFVGATFMGVVPMILISVSY) threads the bilayer. The Cytoplasmic portion of the chain corresponds to 222–239 (AHVAAAVLRIRSTEGRKK). Residues 240–260 (AFSTCGSHLTVVCIFYGTGFF) traverse the membrane as a helical segment. The Extracellular portion of the chain corresponds to 261 to 274 (SYMRLGSVSASDKD). The helical transmembrane segment at 275–295 (KGIGILNTILSPMLNPLIYSL) threads the bilayer. At 296–315 (RNPDVQGALKRVLTGKRYPV) the chain is on the cytoplasmic side.

The protein belongs to the G-protein coupled receptor 1 family.

It localises to the cell membrane. Its function is as follows. Odorant receptor. In Mus musculus (Mouse), this protein is Olfactory receptor 3A10.